Here is a 203-residue protein sequence, read N- to C-terminus: Short chain dehydrogenase/reductase dpmpH (203 aa).

Positions 23, 77, and 81 each coordinate NADP(+). Tyr-77 (proton acceptor) is an active-site residue. Residue Lys-81 is the Lowers pKa of active site Tyr of the active site.

Belongs to the short-chain dehydrogenases/reductases (SDR) family.

It functions in the pathway secondary metabolite biosynthesis; terpenoid biosynthesis. Short chain dehydrogenase/reductase; part of the gene cluster that mediates the biosynthesis of diterpenoid pyrones. The first step of the pathway is the synthesis of the alpha-pyrone moiety by the polyketide synthase dpmpA via condensation of one acetyl-CoA starter unit with 3 malonyl-CoA units and 2 methylations. The alpha-pyrone is then combined with geranylgeranyl pyrophosphate (GGPP) formed by the GGPP synthase dpmpD through the action of the prenyltransferase dpmpC to yield a linear alpha-pyrone diterpenoid. Subsequent steps in the diterpenoid pyrone biosynthetic pathway involve the decalin core formation, which is initiated by the epoxidation of the C10-C11 olefin by the FAD-dependent oxidoreductase dpmpE, and is followed by a cyclization cascade catalyzed by the terpene cyclase dpmpB. The short chain dehydrogenase/reductase dpmpG then oxidizes the 8S hydroxy group to a ketone and the short chain dehydrogenase/reductase dpmpH reduces the ketone to the 8R hydroxy group to yield higginsianin B. Higginsianin B is further methylated by the methyltransferase dpmpI to produce the intermediate named FDDP B. The cytochrome P450 monooxygenase dpmpJ then oxidizes the C-26 methyl to primary alcohol, producing the final diterpenoid pyrone with a C-26 primary alcohol on the gamma-pyrone moiety named FDDP C. This is Short chain dehydrogenase/reductase dpmpH from Macrophomina phaseolina (strain MS6) (Charcoal rot fungus).